A 774-amino-acid polypeptide reads, in one-letter code: Formin-like protein 13 (774 aa).

An N-terminal signal peptide occupies residues 1–22 (MRRRVALSTAIALLVGAQLCVA). The span at 51–67 (PPPPMSGSEAVPPPPPA) shows a compositional bias: pro residues. The segment at 51–78 (PPPPMSGSEAVPPPPPAAAASATTGGGR) is disordered. Low complexity predominate over residues 68-78 (AAASATTGGGR). A helical membrane pass occupies residues 89–109 (IALSAGLVALAVASYSCCLLL). 4 disordered regions span residues 130–163 (AAAAVAARVPSDVGSSSRQHRSPPPSSTASDAIY), 176–338 (HEKS…HLKP), 374–402 (FLNSGGGGAGSSDPAARRGGSGKQERRLL), and 740–774 (GSGKSFRVPAGTSLPPHRNENRRVLSSSDEDSSSS). Over residues 194–216 (DLRPLPPLKRPESQPPPPPPSTP) the composition is skewed to pro residues. Positions 242–261 (SSFSRSTSQHSTLEQTAMPP) are enriched in low complexity. The span at 262-286 (MAAPAPPQTNPPRPVRPPPPPPPPR) shows a compositional bias: pro residues. One can recognise an FH2 domain in the interval 326-749 (GAARPPKPPH…GSGKSFRVPA (424 aa)).

This sequence belongs to the formin-like family. Class-I subfamily.

The protein resides in the membrane. This Oryza sativa subsp. japonica (Rice) protein is Formin-like protein 13 (FH13).